Reading from the N-terminus, the 155-residue chain is Endoribonuclease YbeY (155 aa).

Zn(2+) contacts are provided by His113, His117, and His123.

Belongs to the endoribonuclease YbeY family. It depends on Zn(2+) as a cofactor.

The protein resides in the cytoplasm. Single strand-specific metallo-endoribonuclease involved in late-stage 70S ribosome quality control and in maturation of the 3' terminus of the 16S rRNA. This chain is Endoribonuclease YbeY, found in Ureaplasma urealyticum serovar 10 (strain ATCC 33699 / Western).